The primary structure comprises 153 residues: Myoglobin (153 aa).

One can recognise a Globin domain in the interval 2-147 (GLNDQEWQQV…FRNDMASKYK (146 aa)). Residue H65 participates in nitrite binding. Position 65 (H65) interacts with O2. Heme b is bound at residue H93.

Belongs to the globin family. As to quaternary structure, monomeric.

Its subcellular location is the cytoplasm. The protein resides in the sarcoplasm. The catalysed reaction is Fe(III)-heme b-[protein] + nitric oxide + H2O = Fe(II)-heme b-[protein] + nitrite + 2 H(+). It carries out the reaction H2O2 + AH2 = A + 2 H2O. Monomeric heme protein which primary function is to store oxygen and facilitate its diffusion within muscle tissues. Reversibly binds oxygen through a pentacoordinated heme iron and enables its timely and efficient release as needed during periods of heightened demand. Depending on the oxidative conditions of tissues and cells, and in addition to its ability to bind oxygen, it also has a nitrite reductase activity whereby it regulates the production of bioactive nitric oxide. Under stress conditions, like hypoxia and anoxia, it also protects cells against reactive oxygen species thanks to its pseudoperoxidase activity. This chain is Myoglobin (MB), found in Aptenodytes forsteri (Emperor penguin).